The sequence spans 350 residues: Fe(2+) transport protein 2 (350 aa).

An N-terminal signal peptide occupies residues 1–21 (MATTKLVYILLILFTFTVSPA). Over 22-47 (ISTAPEHCDSGFDNPCINKAKALPLK) the chain is Extracellular. Residues 48 to 68 (IVAIVAILTTSLIGVTSPLFS) form a helical membrane-spanning segment. The Cytoplasmic segment spans residues 69-80 (RYISFLRPDGNG). Residues 81 to 101 (FMIVKCFSSGIILGTGFMHVL) traverse the membrane as a helical segment. The Extracellular portion of the chain corresponds to 102 to 120 (PDSFEMLSSKCLSDNPWHK). Residues 121 to 141 (FPFAGFVAMMSGLVTLAIDSI) form a helical membrane-spanning segment. Over 142–195 (TTSLYTGKNSVGPVPDEEYGIDQEKAIHMVGHNHSHGHGVVLATKDDGQLLRYQ) the chain is Cytoplasmic. The helical transmembrane segment at 196–216 (VIAMVLEVGILFHSVVIGLSL) threads the bilayer. The Extracellular segment spans residues 217–227 (GATNDSCTIKG). Residues 228–248 (LIIALCFHHLFEGIGLGGCIL) form a helical membrane-spanning segment. Topologically, residues 249–257 (QADFTNVKK) are cytoplasmic. Residues 258–278 (FLMAFFFTGTTPCGIFLGIAL) form a helical membrane-spanning segment. Residues 279–289 (SSIYRDNSPTA) lie on the Extracellular side of the membrane. Residues 290–310 (LITIGLLNACSAGMLIYMALV) traverse the membrane as a helical segment. Topologically, residues 311–329 (DLLATEFMGSMLQGSIKLQ) are cytoplasmic. Residues 330–350 (IKCFTAALLGCAVMSVVAVWA) form a helical membrane-spanning segment.

It belongs to the ZIP transporter (TC 2.A.5) family. As to expression, expressed in the external cell layers of the root subapical zone.

The protein localises to the cell membrane. In terms of biological role, high-affinity iron transporter that mediates under iron-deficiency the iron uptake from the rhizosphere across the plasma membrane in the root epidermal layer. Could also be capable of transporting zinc ions. This is Fe(2+) transport protein 2 (IRT2) from Arabidopsis thaliana (Mouse-ear cress).